We begin with the raw amino-acid sequence, 510 residues long: NAD(P) transhydrogenase subunit alpha (510 aa).

At 1–401 the chain is on the cytoplasmic side; sequence MRIGIPRERL…EEKCTCSPWR (401 aa). Residues 120–122, Val175, 195–197, Glu238, and Leu257 contribute to the NAD(+) site; these read RIS and DTR. 2 consecutive transmembrane segments (helical) span residues 402–422 and 423–443; these read KYAL…VAPK and EFLG…YVVW. The Cytoplasmic portion of the chain corresponds to 444–452; sequence NVSHALHTP. The helical transmembrane segment at 453-473 threads the bilayer; the sequence is LMSVTNAISGIIVVGALLQIG. The Periplasmic segment spans residues 474 to 476; sequence QGG. The chain crosses the membrane as a helical span at residues 477–497; it reads WVSFLSFIAVLIASINIFGGF. Residues 498 to 510 are Cytoplasmic-facing; sequence TVTQRMLKMFRKN.

The protein belongs to the AlaDH/PNT family. Heterodimer of an alpha (PntA) and a beta (PntB) chain. Alpha subunit serves as the dimerization unit.

The protein localises to the cell inner membrane. The enzyme catalyses NAD(+) + NADPH + H(+)(in) = NADH + NADP(+) + H(+)(out). The transhydrogenation between NADH and NADP is coupled to respiration and ATP hydrolysis and functions as a proton pump across the membrane. This is NAD(P) transhydrogenase subunit alpha (pntA) from Escherichia coli (strain K12).